We begin with the raw amino-acid sequence, 328 residues long: uncharacterized protein (328 aa).

Positions methionine 1–arginine 22 are disordered. Residues arginine 9–serine 21 are compositionally biased toward polar residues. 6 consecutive transmembrane segments (helical) span residues phenylalanine 66–leucine 86, threonine 126–leucine 146, phenylalanine 176–alanine 196, leucine 221–valine 241, glycine 255–proline 275, and isoleucine 290–isoleucine 310.

To E.coli YhjD.

Its subcellular location is the cell inner membrane. This is an uncharacterized protein from Dickeya dadantii (strain 3937) (Erwinia chrysanthemi (strain 3937)).